The following is a 263-amino-acid chain: 3-methyl-2-oxobutanoate hydroxymethyltransferase (263 aa).

Residues Asp-45 and Asp-84 each coordinate Mg(2+). 3-methyl-2-oxobutanoate is bound by residues 45–46 (DS), Asp-84, and Lys-112. Glu-114 contributes to the Mg(2+) binding site. Glu-181 functions as the Proton acceptor in the catalytic mechanism.

It belongs to the PanB family. Homodecamer; pentamer of dimers. Mg(2+) serves as cofactor.

Its subcellular location is the cytoplasm. It catalyses the reaction 3-methyl-2-oxobutanoate + (6R)-5,10-methylene-5,6,7,8-tetrahydrofolate + H2O = 2-dehydropantoate + (6S)-5,6,7,8-tetrahydrofolate. It participates in cofactor biosynthesis; (R)-pantothenate biosynthesis; (R)-pantoate from 3-methyl-2-oxobutanoate: step 1/2. Catalyzes the reversible reaction in which hydroxymethyl group from 5,10-methylenetetrahydrofolate is transferred onto alpha-ketoisovalerate to form ketopantoate. The sequence is that of 3-methyl-2-oxobutanoate hydroxymethyltransferase from Buchnera aphidicola subsp. Acyrthosiphon pisum (strain 5A).